We begin with the raw amino-acid sequence, 950 residues long: Glycine dehydrogenase (decarboxylating) (950 aa).

N6-(pyridoxal phosphate)lysine is present on lysine 698.

It belongs to the GcvP family. As to quaternary structure, the glycine cleavage system is composed of four proteins: P, T, L and H. Pyridoxal 5'-phosphate serves as cofactor.

It catalyses the reaction N(6)-[(R)-lipoyl]-L-lysyl-[glycine-cleavage complex H protein] + glycine + H(+) = N(6)-[(R)-S(8)-aminomethyldihydrolipoyl]-L-lysyl-[glycine-cleavage complex H protein] + CO2. Its function is as follows. The glycine cleavage system catalyzes the degradation of glycine. The P protein binds the alpha-amino group of glycine through its pyridoxal phosphate cofactor; CO(2) is released and the remaining methylamine moiety is then transferred to the lipoamide cofactor of the H protein. The polypeptide is Glycine dehydrogenase (decarboxylating) (Neisseria gonorrhoeae (strain NCCP11945)).